Reading from the N-terminus, the 82-residue chain is ATP synthase subunit c, chloroplastic (82 aa).

Helical transmembrane passes span 3–23 and 57–77; these read PLIC…GAIG and LAFM…LMFA.

This sequence belongs to the ATPase C chain family. As to quaternary structure, F-type ATPases have 2 components, F(1) - the catalytic core - and F(0) - the membrane proton channel. F(1) has five subunits: alpha(3), beta(3), gamma(1), delta(1), epsilon(1). F(0) has four main subunits: a(1), b(1), b'(1) and c(10-14). The alpha and beta chains form an alternating ring which encloses part of the gamma chain. F(1) is attached to F(0) by a central stalk formed by the gamma and epsilon chains, while a peripheral stalk is formed by the delta, b and b' chains.

It is found in the plastid. The protein localises to the chloroplast thylakoid membrane. F(1)F(0) ATP synthase produces ATP from ADP in the presence of a proton or sodium gradient. F-type ATPases consist of two structural domains, F(1) containing the extramembraneous catalytic core and F(0) containing the membrane proton channel, linked together by a central stalk and a peripheral stalk. During catalysis, ATP synthesis in the catalytic domain of F(1) is coupled via a rotary mechanism of the central stalk subunits to proton translocation. In terms of biological role, key component of the F(0) channel; it plays a direct role in translocation across the membrane. A homomeric c-ring of between 10-14 subunits forms the central stalk rotor element with the F(1) delta and epsilon subunits. In Ostreococcus tauri, this protein is ATP synthase subunit c, chloroplastic.